A 307-amino-acid chain; its full sequence is Ribonuclease HIII (307 aa).

One can recognise an RNase H type-2 domain in the interval Met-93 to Leu-307. Asp-99, Glu-100, and Asp-204 together coordinate a divalent metal cation.

It belongs to the RNase HII family. RnhC subfamily. It depends on Mn(2+) as a cofactor. Requires Mg(2+) as cofactor.

Its subcellular location is the cytoplasm. The catalysed reaction is Endonucleolytic cleavage to 5'-phosphomonoester.. In terms of biological role, endonuclease that specifically degrades the RNA of RNA-DNA hybrids. This chain is Ribonuclease HIII, found in Bacillus pumilus (strain SAFR-032).